A 152-amino-acid polypeptide reads, in one-letter code: FMN reductase (NADH) RutF (152 aa).

This sequence belongs to the non-flavoprotein flavin reductase family. RutF subfamily.

The enzyme catalyses FMNH2 + NAD(+) = FMN + NADH + 2 H(+). Its function is as follows. Catalyzes the reduction of FMN to FMNH2 which is used to reduce pyrimidine by RutA via the Rut pathway. This is FMN reductase (NADH) RutF from Shigella sonnei (strain Ss046).